A 336-amino-acid chain; its full sequence is D-aspartate oxidase (336 aa).

FAD is bound by residues Glu-34, Lys-35, Thr-41, Ser-42, Gly-304, Val-308, and Ser-309. The Microbody targeting signal signature appears at 334–336 (SKL).

This sequence belongs to the DAMOX/DASOX family. In terms of assembly, monomer. It depends on FAD as a cofactor.

The protein localises to the peroxisome matrix. It carries out the reaction D-aspartate + O2 + H2O = oxaloacetate + H2O2 + NH4(+). The enzyme catalyses D-glutamate + O2 + H2O = H2O2 + 2-oxoglutarate + NH4(+). Its function is as follows. Selectively catalyzes the oxidative deamination of acidic amino acids. Suppresses the level of D-aspartate in the brain, an amino acid that can act as an agonist for glutamate receptors. Protects the organism from the toxicity of D-amino acids. May also function in the intestine. This is D-aspartate oxidase from Octopus vulgaris (Common octopus).